Reading from the N-terminus, the 451-residue chain is Probable D-serine dehydratase (451 aa).

N6-(pyridoxal phosphate)lysine is present on K119.

The protein belongs to the serine/threonine dehydratase family. DsdA subfamily. The cofactor is pyridoxal 5'-phosphate.

It carries out the reaction D-serine = pyruvate + NH4(+). This Acidovorax ebreus (strain TPSY) (Diaphorobacter sp. (strain TPSY)) protein is Probable D-serine dehydratase.